We begin with the raw amino-acid sequence, 253 residues long: 1-(5-phosphoribosyl)-5-[(5-phosphoribosylamino)methylideneamino] imidazole-4-carboxamide isomerase (253 aa).

D8 (proton acceptor) is an active-site residue. The Proton donor role is filled by D131.

The protein belongs to the HisA/HisF family.

It is found in the cytoplasm. The enzyme catalyses 1-(5-phospho-beta-D-ribosyl)-5-[(5-phospho-beta-D-ribosylamino)methylideneamino]imidazole-4-carboxamide = 5-[(5-phospho-1-deoxy-D-ribulos-1-ylimino)methylamino]-1-(5-phospho-beta-D-ribosyl)imidazole-4-carboxamide. Its pathway is amino-acid biosynthesis; L-histidine biosynthesis; L-histidine from 5-phospho-alpha-D-ribose 1-diphosphate: step 4/9. The polypeptide is 1-(5-phosphoribosyl)-5-[(5-phosphoribosylamino)methylideneamino] imidazole-4-carboxamide isomerase (Polynucleobacter necessarius subsp. necessarius (strain STIR1)).